The sequence spans 332 residues: Protoheme IX farnesyltransferase (332 aa).

7 helical membrane-spanning segments follow: residues 63-83 (LICT…LNCL), 109-129 (TVFL…ISGV), 132-152 (LAAG…TIIL), 160-180 (IVFG…AATG), 188-208 (WLFG…AILL), 245-265 (ILGV…LLPF), and 286-306 (AKGL…LLLI).

The protein belongs to the UbiA prenyltransferase family. Protoheme IX farnesyltransferase subfamily.

It is found in the cell inner membrane. It carries out the reaction heme b + (2E,6E)-farnesyl diphosphate + H2O = Fe(II)-heme o + diphosphate. The protein operates within porphyrin-containing compound metabolism; heme O biosynthesis; heme O from protoheme: step 1/1. In terms of biological role, converts heme B (protoheme IX) to heme O by substitution of the vinyl group on carbon 2 of heme B porphyrin ring with a hydroxyethyl farnesyl side group. The sequence is that of Protoheme IX farnesyltransferase from Prochlorococcus marinus (strain MIT 9515).